Here is a 217-residue protein sequence, read N- to C-terminus: Probable transaldolase (217 aa).

Lys83 serves as the catalytic Schiff-base intermediate with substrate.

It belongs to the transaldolase family. Type 3B subfamily.

It is found in the cytoplasm. The catalysed reaction is D-sedoheptulose 7-phosphate + D-glyceraldehyde 3-phosphate = D-erythrose 4-phosphate + beta-D-fructose 6-phosphate. Its pathway is carbohydrate degradation; pentose phosphate pathway; D-glyceraldehyde 3-phosphate and beta-D-fructose 6-phosphate from D-ribose 5-phosphate and D-xylulose 5-phosphate (non-oxidative stage): step 2/3. Transaldolase is important for the balance of metabolites in the pentose-phosphate pathway. In Roseobacter denitrificans (strain ATCC 33942 / OCh 114) (Erythrobacter sp. (strain OCh 114)), this protein is Probable transaldolase.